The chain runs to 204 residues: Somatotropin (204 aa).

The signal sequence occupies residues 1–17 (MDRVLLLLSVLTLGVSS). Pyrrolidone carboxylic acid is present on Gln-18. His-36 is a binding site for Zn(2+). Cys-69 and Cys-177 are disulfide-bonded. Glu-186 is a binding site for Zn(2+). A disulfide bridge connects residues Cys-194 and Cys-202.

It belongs to the somatotropin/prolactin family.

Its subcellular location is the secreted. In terms of biological role, growth hormone plays an important role in growth control and is involved in the regulation of several anabolic processes. Implicated as an osmoregulatory substance important for seawater adaptation. The polypeptide is Somatotropin (gh) (Larimichthys crocea (Large yellow croaker)).